A 395-amino-acid polypeptide reads, in one-letter code: Carbamoyl phosphate synthase small chain (395 aa).

Positions 1–192 (MTYNLHPAIL…LQYKTDKMYG (192 aa)) are CPSase. L-glutamine is bound by residues S50, G244, and G246. Residues 196–383 (KIILIDFGVK…INLIKHFKQY (188 aa)) enclose the Glutamine amidotransferase type-1 domain. The active-site Nucleophile is the C273. L-glutamine-binding residues include M274, Q277, N313, G315, and F316. Active-site residues include H356 and E358.

Belongs to the CarA family. In terms of assembly, composed of two chains; the small (or glutamine) chain promotes the hydrolysis of glutamine to ammonia, which is used by the large (or ammonia) chain to synthesize carbamoyl phosphate. Tetramer of heterodimers (alpha,beta)4.

Its subcellular location is the plastid. The protein resides in the chloroplast. The enzyme catalyses hydrogencarbonate + L-glutamine + 2 ATP + H2O = carbamoyl phosphate + L-glutamate + 2 ADP + phosphate + 2 H(+). It catalyses the reaction L-glutamine + H2O = L-glutamate + NH4(+). Its pathway is amino-acid biosynthesis; L-arginine biosynthesis; carbamoyl phosphate from bicarbonate: step 1/1. It participates in pyrimidine metabolism; UMP biosynthesis via de novo pathway; (S)-dihydroorotate from bicarbonate: step 1/3. Functionally, small subunit of the glutamine-dependent carbamoyl phosphate synthetase (CPSase). CPSase catalyzes the formation of carbamoyl phosphate from the ammonia moiety of glutamine, carbonate, and phosphate donated by ATP, constituting the first step of 2 biosynthetic pathways, one leading to arginine and/or urea and the other to pyrimidine nucleotides. The small subunit (glutamine amidotransferase) binds and cleaves glutamine to supply the large subunit with the substrate ammonia. This is Carbamoyl phosphate synthase small chain from Gracilaria tenuistipitata var. liui (Red alga).